The following is an 827-amino-acid chain: Multiphosphoryl transfer protein (827 aa).

The 141-residue stretch at 2–142 (IPLTSELVAI…AVIVARLTGA (141 aa)) folds into the PTS EIIA type-2 domain. Histidine 62 (tele-phosphohistidine intermediate; for EIIA activity) is an active-site residue. Position 62 is a phosphohistidine; by HPr (histidine 62). Residues 157–245 (AQGIDVVVTG…AFEAGLEDEE (89 aa)) enclose the HPr domain. The active-site Pros-phosphohistidine intermediate; for HPr activity is the histidine 171. A Phosphohistidine; by EI modification is found at histidine 171. Residues 270 to 827 (EGRTLVGISS…TTAAEVRGLK (558 aa)) form a PTS EI region. Histidine 457 functions as the Tele-phosphohistidine intermediate; for PTS EI activity in the catalytic mechanism. Position 457 is a phosphohistidine; by autocatalysis (histidine 457). The phosphoenolpyruvate site is built by arginine 564 and arginine 600. Residues glutamate 693 and aspartate 717 each contribute to the Mg(2+) site. Phosphoenolpyruvate contacts are provided by residues 716 to 717 (ND) and arginine 727. The active-site Proton donor is the cysteine 764.

This sequence belongs to the PEP-utilizing enzyme family. Mg(2+) serves as cofactor.

It localises to the cytoplasm. It carries out the reaction L-histidyl-[protein] + phosphoenolpyruvate = N(pros)-phospho-L-histidyl-[protein] + pyruvate. The phosphoenolpyruvate-dependent sugar phosphotransferase system (sugar PTS), a major carbohydrate active transport system, catalyzes the phosphorylation of incoming sugar substrates concomitantly with their translocation across the cell membrane. The enzyme II FruAB PTS system is involved in fructose transport. The sequence is that of Multiphosphoryl transfer protein from Rhodobacter capsulatus (Rhodopseudomonas capsulata).